The sequence spans 139 residues: Acidic phospholipase A2 S1E6-c (139 aa).

The N-terminal stretch at 1–16 (MRTLWILAVLLVGVEG) is a signal peptide. 7 cysteine pairs are disulfide-bonded: Cys-42/Cys-132, Cys-44/Cys-60, Cys-59/Cys-111, Cys-65/Cys-139, Cys-66/Cys-104, Cys-73/Cys-97, and Cys-91/Cys-102. Residues Tyr-43, Gly-45, and Gly-47 each coordinate Ca(2+). Residue His-63 is part of the active site. Asp-64 is a Ca(2+) binding site. Residue Asp-105 is part of the active site.

Belongs to the phospholipase A2 family. Group II subfamily. D49 sub-subfamily. As to quaternary structure, homodimer. Ca(2+) serves as cofactor. As to expression, expressed by the venom gland.

Its subcellular location is the secreted. The enzyme catalyses a 1,2-diacyl-sn-glycero-3-phosphocholine + H2O = a 1-acyl-sn-glycero-3-phosphocholine + a fatty acid + H(+). In terms of biological role, snake venom phospholipase A2 (PLA2) that inhibits ADP-induced platelet aggregation. PLA2 catalyzes the calcium-dependent hydrolysis of the 2-acyl groups in 3-sn-phosphoglycerides. This chain is Acidic phospholipase A2 S1E6-c, found in Calloselasma rhodostoma (Malayan pit viper).